Reading from the N-terminus, the 272-residue chain is MLIHPQFDPVAIHLGPLAIRWYGLMYLAGFIMFLGFGRLRIRQPHIAAKGWTTRDLDDMLFFGVLGVILGGRLGYVLFYKPSYYLAHPLEILKVWEGGMAFHGGFLGVVVAMWLFGKLRRRHWMEVTDFIAPMIPCGLAAGRIGNFINGELWGRATDLPWGMIFPQAGDNIPRHPSQLYQFAGEGVALFIVLWLFARKPRPMGAVSGVFLIGYGAFRFAAEFAREPDNFLGLLALKLSMGQWLSLPMILAGIAMVVWAYRRQPGAGASQPVA.

Transmembrane regions (helical) follow at residues 17-37, 59-79, 95-115, 129-149, 176-196, 202-222, and 237-257; these read LAIRWYGLMYLAGFIMFLGFG, MLFFGVLGVILGGRLGYVLFY, WEGGMAFHGGFLGVVVAMWLF, FIAPMIPCGLAAGRIGNFING, SQLYQFAGEGVALFIVLWLFA, MGAVSGVFLIGYGAFRFAAEF, and LSMGQWLSLPMILAGIAMVVW. Arg-142 is a binding site for a 1,2-diacyl-sn-glycero-3-phospho-(1'-sn-glycerol).

Belongs to the Lgt family.

The protein localises to the cell inner membrane. The catalysed reaction is L-cysteinyl-[prolipoprotein] + a 1,2-diacyl-sn-glycero-3-phospho-(1'-sn-glycerol) = an S-1,2-diacyl-sn-glyceryl-L-cysteinyl-[prolipoprotein] + sn-glycerol 1-phosphate + H(+). The protein operates within protein modification; lipoprotein biosynthesis (diacylglyceryl transfer). In terms of biological role, catalyzes the transfer of the diacylglyceryl group from phosphatidylglycerol to the sulfhydryl group of the N-terminal cysteine of a prolipoprotein, the first step in the formation of mature lipoproteins. This is Phosphatidylglycerol--prolipoprotein diacylglyceryl transferase from Cupriavidus necator (strain ATCC 17699 / DSM 428 / KCTC 22496 / NCIMB 10442 / H16 / Stanier 337) (Ralstonia eutropha).